Here is a 386-residue protein sequence, read N- to C-terminus: MNIHEYQAKELLREFGVAVPTGYPAFTVEEAVAAAAKLDGEVKVVKAQIHAGGRGKAGGVKLAKTDEEVKQYASEILGKTLVTHQTGPEGKVVQRLYIEEGSAIDQEFYLGLVLDRSIGRIVIMGSSEGGMDIEEVAEHTPEKIHKEIVDPVVGLRPFQARRLAFKMEVPTKLVNEFSDMVMKLYKVYVETDCTIAEINPLVTTKDGNVIALDAKLNFDSNALYRHSDILALRDTTEEDPREVEASKHDLSYIALDGNIGCLVNGAGLAMATMDIIKHYGAEPANFLDVGGGATKEKVTEAFKLILSDDQVKGIFVNIFGGIMKCDIIAEGIVAATKEIGLDLPLVVRLEGTNVDAGKRILDESGLAITTANSMADGAEKIAALVR.

Residues lysine 9 to glutamate 244 enclose the ATP-grasp domain. Residues lysine 46, glycine 53–glycine 55, glutamate 99, serine 102, and glutamate 107 each bind ATP. Positions 199 and 213 each coordinate Mg(2+). Residues asparagine 264 and glycine 321–methionine 323 contribute to the substrate site.

The protein belongs to the succinate/malate CoA ligase beta subunit family. Heterotetramer of two alpha and two beta subunits. Mg(2+) serves as cofactor.

The catalysed reaction is succinate + ATP + CoA = succinyl-CoA + ADP + phosphate. It catalyses the reaction GTP + succinate + CoA = succinyl-CoA + GDP + phosphate. It functions in the pathway carbohydrate metabolism; tricarboxylic acid cycle; succinate from succinyl-CoA (ligase route): step 1/1. Succinyl-CoA synthetase functions in the citric acid cycle (TCA), coupling the hydrolysis of succinyl-CoA to the synthesis of either ATP or GTP and thus represents the only step of substrate-level phosphorylation in the TCA. The beta subunit provides nucleotide specificity of the enzyme and binds the substrate succinate, while the binding sites for coenzyme A and phosphate are found in the alpha subunit. This chain is Succinate--CoA ligase [ADP-forming] subunit beta, found in Exiguobacterium sp. (strain ATCC BAA-1283 / AT1b).